The primary structure comprises 256 residues: Thiazole synthase (256 aa).

Lysine 96 (schiff-base intermediate with DXP) is an active-site residue. 1-deoxy-D-xylulose 5-phosphate contacts are provided by residues glycine 157, 183–184 (AG), and 205–206 (NT).

Belongs to the ThiG family. Homotetramer. Forms heterodimers with either ThiH or ThiS.

It localises to the cytoplasm. It catalyses the reaction [ThiS sulfur-carrier protein]-C-terminal-Gly-aminoethanethioate + 2-iminoacetate + 1-deoxy-D-xylulose 5-phosphate = [ThiS sulfur-carrier protein]-C-terminal Gly-Gly + 2-[(2R,5Z)-2-carboxy-4-methylthiazol-5(2H)-ylidene]ethyl phosphate + 2 H2O + H(+). The protein operates within cofactor biosynthesis; thiamine diphosphate biosynthesis. Functionally, catalyzes the rearrangement of 1-deoxy-D-xylulose 5-phosphate (DXP) to produce the thiazole phosphate moiety of thiamine. Sulfur is provided by the thiocarboxylate moiety of the carrier protein ThiS. In vitro, sulfur can be provided by H(2)S. This is Thiazole synthase from Bacillus mycoides (strain KBAB4) (Bacillus weihenstephanensis).